The sequence spans 126 residues: uncharacterized protein (126 aa).

One can recognise an HIT domain in the interval 19–126 (IFERIIEGAV…LGGGLLGSIA (108 aa)). Residues 111 to 115 (HLHIH) carry the Histidine triad motif motif.

This is an uncharacterized protein from Chlamydia muridarum (strain MoPn / Nigg).